The primary structure comprises 211 residues: MSTAAVPELKQISRVEAMRLGPGWSHSCHAMLYAANPGQLFGRIPMRFSVLMQMRFDGLLGFPGGFVDRRFWSLEDGLNRVLGLGLGCLRLTEADYLSSHLTEGPHRVVAHLYARQLTLEQLHAVEISAVHSRDHGLEVLGLVRVPLYTQKDRVGGFPNFLSNAFVSTAKCQLLFALKVLNMMPEEKLVEALAAATEKQKKALEKLLPASS.

Glycyl lysine isopeptide (Lys-Gly) (interchain with G-Cter in ubiquitin) cross-links involve residues lysine 10 and lysine 151. Residues 118 to 205 (TLEQLHAVEI…TEKQKKALEK (88 aa)) are interaction with PXN.

Belongs to the Nudix hydrolase family. TIRR subfamily. As to quaternary structure, homodimer. Interacts with TP53BP1 (via the Tudor-like domain); interaction is abolished following DNA damage and TP53BP1 phosphorylation by ATM. Interacts (via the cytoplasmic part) with SDC4. Interacts with TGFB1I1 and PXN.

It is found in the nucleus. Functionally, key regulator of TP53BP1 required to stabilize TP53BP1 and regulate its recruitment to chromatin. In absence of DNA damage, interacts with the tandem Tudor-like domain of TP53BP1, masking the region that binds histone H4 dimethylated at 'Lys-20' (H4K20me2), thereby preventing TP53BP1 recruitment to chromatin and maintaining TP53BP1 localization to the nucleus. Following DNA damage, ATM-induced phosphorylation of TP53BP1 and subsequent recruitment of RIF1 leads to dissociate NUDT16L1/TIRR from TP53BP1, unmasking the tandem Tudor-like domain and allowing recruitment of TP53BP1 to DNA double strand breaks (DSBs). Binds U8 snoRNA. The chain is Tudor-interacting repair regulator protein from Homo sapiens (Human).